A 92-amino-acid chain; its full sequence is Small ribosomal subunit protein uS19 (92 aa).

This sequence belongs to the universal ribosomal protein uS19 family.

In terms of biological role, protein S19 forms a complex with S13 that binds strongly to the 16S ribosomal RNA. The protein is Small ribosomal subunit protein uS19 of Rickettsia akari (strain Hartford).